We begin with the raw amino-acid sequence, 681 residues long: MQLEHCLSPSIMLSKKFLNVSSSYPHSGGSELVLHDHPIISTTDNLERSSPLKKITRGMTNQSDTDNFPDSKDSPGDVQRSKLSPVLDGVSELRHSFDGSAADRYLLSQSSQPQSAATAPSAMFPYPSQHGPAHPAFSIGSPSRYMAHHPVITNGAYNSLLSNSSPQGYPTAGYPYPQQYGHSYQGAPFYQFSSTQPGLVPGKAQVYLCNRPLWLKFHRHQTEMIITKQGRRMFPFLSFNISGLDPTAHYNIFVDVILADPNHWRFQGGKWVPCGKADTNVQGNRVYMHPDSPNTGAHWMRQEISFGKLKLTNNKGASNNNGQMVVLQSLHKYQPRLHVVEVNEDGTEDTSQPGRVQTFTFPETQFIAVTAYQNTDITQLKIDHNPFAKGFRDNYDTIYTGCDMDRLTPSPNDSPRSQIVPGARYAMAGSFLQDQFVSNYAKARFHPGAGAGPGPGTDRSVPHTNGLLSPQQAEDPGAPSPQRWFVTPANNRLDFAASAYDTATDFAGNAATLLSYAAAGVKALPLQAAGCTGRPLGYYADPSGWGARSPPQYCGAKSGSVLPCWPNSAAAAARMAGANPYLGEEAEGLAAERSPLAPAAEDAKPKDLSDSSWIETPSSIKSIDSSDSGIYEQAKRRRISPADTPVSESSSPLKSEVLAQRDCEKNCAKDIGGYYGFYSHS.

2 disordered regions span residues 43-83 (TDNL…RSKL) and 108-127 (SQSS…FPYP). Polar residues predominate over residues 58–68 (GMTNQSDTDNF). Residues 108–122 (SQSSQPQSAATAPSA) show a composition bias toward low complexity. A DNA-binding region (T-box) is located at residues 213 to 393 (LWLKFHRHQT…HNPFAKGFRD (181 aa)). Thr408 is modified (phosphothreonine). At Ser410 the chain carries Phosphoserine. The tract at residues 447 to 483 (PGAGAGPGPGTDRSVPHTNGLLSPQQAEDPGAPSPQR) is disordered. Over residues 462-472 (PHTNGLLSPQQ) the composition is skewed to polar residues. A Phosphoserine modification is found at Ser594. The interval 597–655 (APAAEDAKPKDLSDSSWIETPSSIKSIDSSDSGIYEQAKRRRISPADTPVSESSSPLKS) is disordered. A compositionally biased stretch (low complexity) spans 618–628 (SSIKSIDSSDS). Ser640 carries the phosphoserine modification.

In terms of assembly, homodimer. Part of a complex containing CASK, TBR1 and TSPYL2; may modulate gene expression in response to neuronal synaptic activity. Forms homodimers. Interacts with FOXP2. Interacts with FOXP1. Interacts with BCL11A. As to expression, expressed in the developing and adult cortex. Expressed in the olfactory bulbs.

It localises to the nucleus. Its function is as follows. Transcriptional repressor involved in multiple aspects of cortical development, including neuronal migration, laminar and areal identity, and axonal projection. As transcriptional repressor of FEZF2, it blocks the formation of the corticospinal (CS) tract from layer 6 projection neurons, thereby restricting the origin of CS axons specifically to layer 5 neurons. The polypeptide is T-box brain protein 1 (Tbr1) (Mus musculus (Mouse)).